The chain runs to 59 residues: Large ribosomal subunit protein uL30 (59 aa).

It belongs to the universal ribosomal protein uL30 family. Part of the 50S ribosomal subunit.

The sequence is that of Large ribosomal subunit protein uL30 from Haemophilus ducreyi (strain 35000HP / ATCC 700724).